Here is a 491-residue protein sequence, read N- to C-terminus: Ketol-acid reductoisomerase (NADP(+)) (491 aa).

The KARI N-terminal Rossmann domain maps to 15 to 208 (AQLGKCRFMG…GGHRAGVLES (194 aa)). Residues 45–48 (CGAQ), R68, R76, S78, and 108–110 (DKQ) contribute to the NADP(+) site. H132 is an active-site residue. G158 is an NADP(+) binding site. KARI C-terminal knotted domains are found at residues 209-344 (SFVA…TAPQ) and 345-484 (YEGK…MTDM). 4 residues coordinate Mg(2+): D217, E221, E389, and E393. S414 contacts substrate.

The protein belongs to the ketol-acid reductoisomerase family. Mg(2+) is required as a cofactor.

It catalyses the reaction (2R)-2,3-dihydroxy-3-methylbutanoate + NADP(+) = (2S)-2-acetolactate + NADPH + H(+). The enzyme catalyses (2R,3R)-2,3-dihydroxy-3-methylpentanoate + NADP(+) = (S)-2-ethyl-2-hydroxy-3-oxobutanoate + NADPH + H(+). Its pathway is amino-acid biosynthesis; L-isoleucine biosynthesis; L-isoleucine from 2-oxobutanoate: step 2/4. The protein operates within amino-acid biosynthesis; L-valine biosynthesis; L-valine from pyruvate: step 2/4. In terms of biological role, involved in the biosynthesis of branched-chain amino acids (BCAA). Catalyzes an alkyl-migration followed by a ketol-acid reduction of (S)-2-acetolactate (S2AL) to yield (R)-2,3-dihydroxy-isovalerate. In the isomerase reaction, S2AL is rearranged via a Mg-dependent methyl migration to produce 3-hydroxy-3-methyl-2-ketobutyrate (HMKB). In the reductase reaction, this 2-ketoacid undergoes a metal-dependent reduction by NADPH to yield (R)-2,3-dihydroxy-isovalerate. In Escherichia coli (strain ATCC 8739 / DSM 1576 / NBRC 3972 / NCIMB 8545 / WDCM 00012 / Crooks), this protein is Ketol-acid reductoisomerase (NADP(+)).